Here is a 202-residue protein sequence, read N- to C-terminus: Protein GrpE (202 aa).

The segment covering 21 to 37 (EELKNEEVKEETHEHEH) has biased composition (basic and acidic residues). The interval 21–52 (EELKNEEVKEETHEHEHKHGGHTCCGKHGHKH) is disordered. Basic residues predominate over residues 38 to 51 (KHGGHTCCGKHGHK).

Belongs to the GrpE family. Homodimer.

The protein localises to the cytoplasm. Its function is as follows. Participates actively in the response to hyperosmotic and heat shock by preventing the aggregation of stress-denatured proteins, in association with DnaK and GrpE. It is the nucleotide exchange factor for DnaK and may function as a thermosensor. Unfolded proteins bind initially to DnaJ; upon interaction with the DnaJ-bound protein, DnaK hydrolyzes its bound ATP, resulting in the formation of a stable complex. GrpE releases ADP from DnaK; ATP binding to DnaK triggers the release of the substrate protein, thus completing the reaction cycle. Several rounds of ATP-dependent interactions between DnaJ, DnaK and GrpE are required for fully efficient folding. This Fusobacterium nucleatum subsp. polymorphum (Fusobacterium polymorphum) protein is Protein GrpE.